A 1124-amino-acid polypeptide reads, in one-letter code: MSVEAYGPSSQTLTFLDTEEAELLGADTQGSEFEFTDFTLPSQTQTPPGGPGGAGGPGGAGAGGAAGQLDAQVGPEGILQNGAVDDSVAKTSQLLAELNFEEDEEDTYYTKDLPVHACSYCGIHDPACVVYCNTSKKWFCNGRGNTSGSHIVNHLVRAKCKEVTLHKDGPLGETVLECYNCGCRNVFLLGFIPAKADSVVVLLCRQPCASQSSLKDINWDSSQWQPLIQDRCFLSWLVKIPSEQEQLRARQITAQQINKLEELWKENPSATLEDLEKPGVDEEPQHVLLRYEDAYQYQNIFGPLVKLEADYDKKLKESQTQDNITVRWDLGLNKKRIAFFTLPKTDSGNEDLVIIWLRDMRLMQGDEICLRYKGDLAPLWKGIGHVIKVPDNYGDEIAIELRSSVGAPVEVTHNFQVDFVWKSTSFDRMQSALKTFAVDETSVSGYIYHKLLGHEVEDVVIKCQLPKRFTAQGLPDLNHSQVYAVKTVLQRPLSLIQGPPGTGKTVTSATIVYHLARQGNGPVLVCAPSNIAVDQLTEKIHQTGLKVVRLCAKSREAIDSPVSFLALHNQIRNMDSMPELQKLQQLKDETGELSSADEKRYRALKRTAERELLMNADVICCTCVGAGDPRLAKMQFRSILIDESTQATEPECMVPVVLGAKQLILVGDHCQLGPVVMCKKAAKAGLSQSLFERLVVLGIRPIRLQVQYRMHPALSAFPSNIFYEGSLQNGVTAADRVKKGFDFQWPQPDKPMFFYVTQGQEEIASSGTSYLNRTEAANVEKITTKLLKAGAKPDQIGIITPYEGQRSYLVQYMQFSGSLHTKLYQEVEIASVDAFQGREKDFIILSCVRANEHQGIGFLNDPRRLNVALTRARYGVIIVGNPKALSKQPLWNHLLSYYKEQKALVEGPLNNLRESLMQFSKPRKLVNTVNPGARFMTTAMYDAREAIIPGSVYDRSSQGRPSNMYFQTHDQISMISAGPSHVAAMNIPIPFNLVMPPMPPPGYFGQANGPAAGRGTPKTKTGRGGRQKNRFGLPGPSQTTLPNSQASQDVASQPFSQGALTQGYVSMSQPSQMSQPGLSQPELSQDSYLGDEFKSQIDVALSQDSTYQGERAYQHGGVTGLSQY.

A sufficient for interaction with RENT2 region spans residues 1 to 410; the sequence is MSVEAYGPSS…LRSSVGAPVE (410 aa). A phosphoserine mark is found at Ser10 and Ser31. The disordered stretch occupies residues 39–69; the sequence is TLPSQTQTPPGGPGGAGGPGGAGAGGAAGQL. Gly residues predominate over residues 51 to 66; that stretch reads PGGAGGPGGAGAGGAA. The Upf1 CH-rich domain occupies 110–267; that stretch reads TKDLPVHACS…NKLEELWKEN (158 aa). Residues Cys118, Cys121, Cys132, Ser135, Cys140, His150, His154, Cys160, Cys178, Cys181, Cys204, and Cys208 each contribute to the Zn(2+) site. The interval 118–150 is C3H; the sequence is CSYCGIHDPACVVYCNTSKKWFCNGRGNTSGSH. Positions 132–160 are CC/SHH/C; that stretch reads CNTSKKWFCNGRGNTSGSHIVNHLVRAKC. Residues 178–208 form a C4 region; the sequence is CYNCGCRNVFLLGFIPAKADSVVVLLCRQPC. Residues Gln481 and 501–505 contribute to the ATP site; that span reads GTGKT. Residue Ser560 is modified to Phosphoserine. Positions 671, 708, and 839 each coordinate ATP. Residue Ser951 is modified to Phosphoserine. Disordered stretches follow at residues 1004–1053 and 1066–1091; these read FGQA…VASQ and SMSQ…YLGD. The residue at position 1014 (Arg1014) is an Omega-N-methylarginine. A compositionally biased stretch (basic residues) spans 1020-1029; that stretch reads KTGRGGRQKN. The segment covering 1036–1053 has biased composition (polar residues); that stretch reads PSQTTLPNSQASQDVASQ. A compositionally biased stretch (low complexity) spans 1066-1081; the sequence is SMSQPSQMSQPGLSQP. Residues Ser1084, Ser1102, Ser1105, and Ser1122 each carry the phosphoserine modification. Short sequence motifs ([ST]-Q motif) lie at residues 1084 to 1085 and 1102 to 1103; these read SQ. The segment at 1105-1124 is disordered; the sequence is STYQGERAYQHGGVTGLSQY.

Belongs to the DNA2/NAM7 helicase family. As to quaternary structure, found in a post-splicing messenger ribonucleoprotein (mRNP) complex. Associates with the exon junction complex (EJC). Associates with the SGM1C complex; is phosphorylated by the complex kinase component SGM1. Part of a complex composed of SMG1, DHX34 and UPF1; within the complex DHX34 acts as a scaffolding protein to facilitate SMG1 phosphorylation of UPF1. Interacts with UPF2. Interacts with UPF3A and UPF3B. Interacts with EST1A. Interacts with SLBP. Interacts (when hyperphosphorylated) with PNRC2. Interacts with AGO1 and AGO2. Interacts with GSPT2. Interacts with isoform 1 and isoform 5 of ADAR/ADAR1. Interacts with SMG7. Interacts with ZC3H12A; this interaction occurs in a mRNA translationally active- and termination-dependent manner and is essential for ZC3H12A-mediated degradation of target mRNAs. Interacts with CPSF6. Interacts with MOV10; the interaction is direct and RNA-dependent. Interacts with SHFL; the interaction increases in the presence of RNA. Interacts with UPF2 and DDX4; interactions are mediated by TDRD6. Interacts with DHX34 and PABPC1/PABP1; the interactions are RNA-independent. Interacts with RBM46. Post-translationally, phosphorylated by SMG1; required for formation of mRNA surveillance complexes. In terms of tissue distribution, localizes in male germ cells.

It is found in the cytoplasm. Its subcellular location is the P-body. It localises to the nucleus. The protein localises to the perinuclear region. The enzyme catalyses ATP + H2O = ADP + phosphate + H(+). In terms of biological role, RNA-dependent helicase required for nonsense-mediated decay (NMD) of aberrant mRNAs containing premature stop codons and modulates the expression level of normal mRNAs. Is recruited to mRNAs upon translation termination and undergoes a cycle of phosphorylation and dephosphorylation; its phosphorylation appears to be a key step in NMD. Recruited by release factors to stalled ribosomes together with the SMG1C protein kinase complex to form the transient SURF (SMG1-UPF1-eRF1-eRF3) complex. In EJC-dependent NMD, the SURF complex associates with the exon junction complex (EJC) (located 50-55 or more nucleotides downstream from the termination codon) through UPF2 and allows the formation of an UPF1-UPF2-UPF3 surveillance complex which is believed to activate NMD. Phosphorylated UPF1 is recognized by EST1B/SMG5, SMG6 and SMG7 which are thought to provide a link to the mRNA degradation machinery involving exonucleolytic and endonucleolytic pathways, and to serve as adapters to protein phosphatase 2A (PP2A), thereby triggering UPF1 dephosphorylation and allowing the recycling of NMD factors. UPF1 can also activate NMD without UPF2 or UPF3, and in the absence of the NMD-enhancing downstream EJC indicative for alternative NMD pathways. Plays a role in replication-dependent histone mRNA degradation at the end of phase S; the function is independent of UPF2. For the recognition of premature termination codons (PTC) and initiation of NMD a competitive interaction between UPF1 and PABPC1 with the ribosome-bound release factors is proposed. The ATPase activity of UPF1 is required for disassembly of mRNPs undergoing NMD. Together with UPF2 and dependent on TDRD6, mediates the degradation of mRNA harboring long 3'UTR by inducing the NMD machinery. Also capable of unwinding double-stranded DNA and translocating on single-stranded DNA. The chain is Regulator of nonsense transcripts 1 from Mus musculus (Mouse).